A 480-amino-acid polypeptide reads, in one-letter code: RuvB-like helicase 2 (480 aa).

Position 73 to 80 (73 to 80) interacts with ATP; it reads GEPSTGKT.

This sequence belongs to the RuvB family. Forms homohexameric rings. May form a dodecamer with rept made of two stacked hexameric rings. Component of the chromatin remodeling Ino80 complex.

It is found in the nucleus. The catalysed reaction is ATP + H2O = ADP + phosphate + H(+). Its function is as follows. Acts as a transcriptional coactivator in Wg signaling caused by altered arm signaling. Pont and rept interfere antagonistically with nuclear arm signaling function, and are required to enhance or reduce arm activity, respectively. Also an essential cofactor for the normal function of Myc; required for cellular proliferation and growth. In terms of biological role, proposed core component of the chromatin remodeling Ino80 complex which is involved in transcriptional regulation, DNA replication and probably DNA repair. This Drosophila pseudoobscura pseudoobscura (Fruit fly) protein is RuvB-like helicase 2.